We begin with the raw amino-acid sequence, 263 residues long: Ribosomal RNA large subunit methyltransferase E (263 aa).

S-adenosyl-L-methionine-binding residues include Gly48, Trp50, Asp68, Asp88, and Asp118. Lys158 functions as the Proton acceptor in the catalytic mechanism. The TRAM domain maps to 205 to 263 (PVREGDIVEATIEDIGEEGDGIAKVENFTVFVSGVEDGETVEVRIDDVKPRYAFAEPVE).

It belongs to the class I-like SAM-binding methyltransferase superfamily. RNA methyltransferase RlmE family.

It localises to the cytoplasm. The catalysed reaction is uridine(2552) in 23S rRNA + S-adenosyl-L-methionine = 2'-O-methyluridine(2552) in 23S rRNA + S-adenosyl-L-homocysteine + H(+). Functionally, specifically methylates the uridine in position 2552 of 23S rRNA at the 2'-O position of the ribose in the fully assembled 50S ribosomal subunit. This chain is Ribosomal RNA large subunit methyltransferase E, found in Haloarcula marismortui (strain ATCC 43049 / DSM 3752 / JCM 8966 / VKM B-1809) (Halobacterium marismortui).